Here is a 448-residue protein sequence, read N- to C-terminus: Argininosuccinate synthase (448 aa).

ATP is bound by residues 17–25 and alanine 43; that span reads AFSGGLDTS. Tyrosine 99 is a binding site for L-citrulline. ATP is bound by residues glycine 129 and threonine 131. Residues threonine 131, asparagine 135, and aspartate 136 each coordinate L-aspartate. An L-citrulline-binding site is contributed by asparagine 135. Aspartate 136 provides a ligand contact to ATP. Positions 139 and 192 each coordinate L-citrulline. Position 194 (aspartate 194) interacts with ATP. Threonine 201, glutamate 203, and glutamate 280 together coordinate L-citrulline.

Belongs to the argininosuccinate synthase family. Type 2 subfamily. Homotetramer.

The protein resides in the cytoplasm. The enzyme catalyses L-citrulline + L-aspartate + ATP = 2-(N(omega)-L-arginino)succinate + AMP + diphosphate + H(+). The protein operates within amino-acid biosynthesis; L-arginine biosynthesis; L-arginine from L-ornithine and carbamoyl phosphate: step 2/3. This is Argininosuccinate synthase from Bradyrhizobium sp. (strain ORS 278).